The chain runs to 964 residues: Chaperone protein ClpB4, mitochondrial (964 aa).

A mitochondrion-targeting transit peptide spans 1 to 39; that stretch reads MALRRLSKSVSSAIKAQYTLSRPSPLLRSRSLSSSPHYT. The 145-residue stretch at 83-227 folds into the Clp R domain; it reads VNQNEFTEMA…KDAIKDVRGD (145 aa). Repeat regions lie at residues 88–153 and 164–227; these read FTEM…ISKQ and LGSS…VRGD. Positions 242-490 are i; sequence LEKYGNDLTE…KLKMEITSKP (249 aa). ATP is bound by residues 287 to 294 and 690 to 697; these read GEPGVGKT and GPTGVGKT. The II stretch occupies residues 616–807; that stretch reads VTDLDIAEIV…VVIMTSNIGS (192 aa).

It belongs to the ClpA/ClpB family.

The protein resides in the mitochondrion. Functionally, molecular chaperone that does not seem to be involved in heat stress response or tolerance. In Arabidopsis thaliana (Mouse-ear cress), this protein is Chaperone protein ClpB4, mitochondrial (CLPB4).